The following is a 401-amino-acid chain: Tyrosine--tRNA ligase (401 aa).

The 'HIGH' region motif lies at proline 42–histidine 51. A 'KMSKS' region motif is present at residues lysine 226–serine 230. Position 229 (lysine 229) interacts with ATP. An S4 RNA-binding domain is found at methionine 334–leucine 394.

It belongs to the class-I aminoacyl-tRNA synthetase family. TyrS type 2 subfamily. Homodimer.

The protein resides in the cytoplasm. The catalysed reaction is tRNA(Tyr) + L-tyrosine + ATP = L-tyrosyl-tRNA(Tyr) + AMP + diphosphate + H(+). Its function is as follows. Catalyzes the attachment of tyrosine to tRNA(Tyr) in a two-step reaction: tyrosine is first activated by ATP to form Tyr-AMP and then transferred to the acceptor end of tRNA(Tyr). This Haemophilus influenzae (strain ATCC 51907 / DSM 11121 / KW20 / Rd) protein is Tyrosine--tRNA ligase.